The following is a 149-amino-acid chain: Large ribosomal subunit protein bL9 (149 aa).

The protein belongs to the bacterial ribosomal protein bL9 family.

Functionally, binds to the 23S rRNA. This Bacillus velezensis (strain DSM 23117 / BGSC 10A6 / LMG 26770 / FZB42) (Bacillus amyloliquefaciens subsp. plantarum) protein is Large ribosomal subunit protein bL9.